Reading from the N-terminus, the 112-residue chain is T cell receptor alpha variable 13-1 (112 aa).

Residues 1-20 (MTSIRAVFIFLWLQLDLVNG) form the signal peptide. The 92-residue stretch at 21–112 (ENVEQHPSTL…DSAVYFCAAS (92 aa)) folds into the Ig-like domain. C42 and C109 are disulfide-bonded. A glycan (N-linked (GlcNAc...) asparagine) is linked at N86.

As to quaternary structure, alpha-beta TR is a heterodimer composed of an alpha and beta chain; disulfide-linked. The alpha-beta TR is associated with the transmembrane signaling CD3 coreceptor proteins to form the TR-CD3 (TcR or TCR). The assembly of alpha-beta TR heterodimers with CD3 occurs in the endoplasmic reticulum where a single alpha-beta TR heterodimer associates with one CD3D-CD3E heterodimer, one CD3G-CD3E heterodimer and one CD247 homodimer forming a stable octameric structure. CD3D-CD3E and CD3G-CD3E heterodimers preferentially associate with TR alpha and TR beta chains, respectively. The association of the CD247 homodimer is the last step of TcR assembly in the endoplasmic reticulum and is required for transport to the cell surface.

The protein resides in the cell membrane. Functionally, v region of the variable domain of T cell receptor (TR) alpha chain that participates in the antigen recognition. Alpha-beta T cell receptors are antigen specific receptors which are essential to the immune response and are present on the cell surface of T lymphocytes. Recognize peptide-major histocompatibility (MH) (pMH) complexes that are displayed by antigen presenting cells (APC), a prerequisite for efficient T cell adaptive immunity against pathogens. Binding of alpha-beta TR to pMH complex initiates TR-CD3 clustering on the cell surface and intracellular activation of LCK that phosphorylates the ITAM motifs of CD3G, CD3D, CD3E and CD247 enabling the recruitment of ZAP70. In turn ZAP70 phosphorylates LAT, which recruits numerous signaling molecules to form the LAT signalosome. The LAT signalosome propagates signal branching to three major signaling pathways, the calcium, the mitogen-activated protein kinase (MAPK) kinase and the nuclear factor NF-kappa-B (NF-kB) pathways, leading to the mobilization of transcription factors that are critical for gene expression and essential for T cell growth and differentiation. The T cell repertoire is generated in the thymus, by V-(D)-J rearrangement. This repertoire is then shaped by intrathymic selection events to generate a peripheral T cell pool of self-MH restricted, non-autoaggressive T cells. Post-thymic interaction of alpha-beta TR with the pMH complexes shapes TR structural and functional avidity. This Homo sapiens (Human) protein is T cell receptor alpha variable 13-1.